Consider the following 43-residue polypeptide: Protein PsbN (43 aa).

The helical transmembrane segment at 7-29 threads the bilayer; it reads VAIFLSGLLVSFTGYALYTAFGQ.

The protein belongs to the PsbN family.

It is found in the plastid. The protein localises to the chloroplast thylakoid membrane. Functionally, may play a role in photosystem I and II biogenesis. This is Protein PsbN from Draba nemorosa (Woodland whitlowgrass).